The sequence spans 360 residues: Aspartate beta-hydroxylase domain-containing protein 1 (360 aa).

Topologically, residues 1–45 are cytoplasmic; that stretch reads MWKGGNQEAVIEGSGGELGVPGSWGLQDAACHLARASLPIMFPWP. A helical membrane pass occupies residues 46–68; that stretch reads LPLGSSALTMLLGALTSLFLWYC. Over 69–360 the chain is Lumenal; sequence YRLGSQDMQA…ALDFVFAPDP (292 aa).

Belongs to the aspartyl/asparaginyl beta-hydroxylase family.

Its subcellular location is the membrane. This is Aspartate beta-hydroxylase domain-containing protein 1 (Asphd1) from Mus musculus (Mouse).